A 384-amino-acid polypeptide reads, in one-letter code: Cell division protein FtsZ (384 aa).

GTP-binding positions include 20–24 (GGGSN), 107–109 (GTG), Glu138, Arg142, and Asn186.

It belongs to the FtsZ family. As to quaternary structure, homodimer. Polymerizes to form a dynamic ring structure in a strictly GTP-dependent manner. Interacts directly with several other division proteins.

Its subcellular location is the cytoplasm. Its function is as follows. Essential cell division protein that forms a contractile ring structure (Z ring) at the future cell division site. The regulation of the ring assembly controls the timing and the location of cell division. One of the functions of the FtsZ ring is to recruit other cell division proteins to the septum to produce a new cell wall between the dividing cells. Binds GTP and shows GTPase activity. This is Cell division protein FtsZ from Buchnera aphidicola subsp. Acyrthosiphon pisum (strain APS) (Acyrthosiphon pisum symbiotic bacterium).